The chain runs to 1375 residues: DNA-directed RNA polymerase subunit beta (1375 aa).

The protein belongs to the RNA polymerase beta chain family. In terms of assembly, the RNAP catalytic core consists of 2 alpha, 1 beta, 1 beta' and 1 omega subunit. When a sigma factor is associated with the core the holoenzyme is formed, which can initiate transcription.

The catalysed reaction is RNA(n) + a ribonucleoside 5'-triphosphate = RNA(n+1) + diphosphate. DNA-dependent RNA polymerase catalyzes the transcription of DNA into RNA using the four ribonucleoside triphosphates as substrates. This Coxiella burnetii (strain RSA 331 / Henzerling II) protein is DNA-directed RNA polymerase subunit beta.